A 232-amino-acid polypeptide reads, in one-letter code: Phosphatidylserine decarboxylase proenzyme (232 aa).

Serine 190 serves as the catalytic Schiff-base intermediate with substrate; via pyruvic acid. At serine 190 the chain carries Pyruvic acid (Ser); by autocatalysis.

It belongs to the phosphatidylserine decarboxylase family. PSD-A subfamily. In terms of assembly, heterodimer of a large membrane-associated beta subunit and a small pyruvoyl-containing alpha subunit. It depends on pyruvate as a cofactor. Post-translationally, is synthesized initially as an inactive proenzyme. Formation of the active enzyme involves a self-maturation process in which the active site pyruvoyl group is generated from an internal serine residue via an autocatalytic post-translational modification. Two non-identical subunits are generated from the proenzyme in this reaction, and the pyruvate is formed at the N-terminus of the alpha chain, which is derived from the carboxyl end of the proenzyme. The post-translation cleavage follows an unusual pathway, termed non-hydrolytic serinolysis, in which the side chain hydroxyl group of the serine supplies its oxygen atom to form the C-terminus of the beta chain, while the remainder of the serine residue undergoes an oxidative deamination to produce ammonia and the pyruvoyl prosthetic group on the alpha chain.

It is found in the cell membrane. The catalysed reaction is a 1,2-diacyl-sn-glycero-3-phospho-L-serine + H(+) = a 1,2-diacyl-sn-glycero-3-phosphoethanolamine + CO2. The protein operates within phospholipid metabolism; phosphatidylethanolamine biosynthesis; phosphatidylethanolamine from CDP-diacylglycerol: step 2/2. Its function is as follows. Catalyzes the formation of phosphatidylethanolamine (PtdEtn) from phosphatidylserine (PtdSer). This chain is Phosphatidylserine decarboxylase proenzyme, found in Agrobacterium fabrum (strain C58 / ATCC 33970) (Agrobacterium tumefaciens (strain C58)).